Consider the following 255-residue polypeptide: Electron transfer flavoprotein beta subunit lysine methyltransferase (255 aa).

A mitochondrion-targeting transit peptide spans 1–32 (MAFSLCWKAPRSPWSFLQAVNNGSPLFLWRTV).

This sequence belongs to the methyltransferase superfamily. ETFBKMT family. In terms of assembly, interacts with HSPD1; this protein may possibly be a methylation substrate.

The protein resides in the cytoplasm. It is found in the mitochondrion matrix. It carries out the reaction L-lysyl-[protein] + 3 S-adenosyl-L-methionine = N(6),N(6),N(6)-trimethyl-L-lysyl-[protein] + 3 S-adenosyl-L-homocysteine + 3 H(+). In terms of biological role, protein-lysine methyltransferase that selectively trimethylates the flavoprotein ETFB in mitochondria. Thereby, may negatively regulate the function of ETFB in electron transfer from Acyl-CoA dehydrogenases. The sequence is that of Electron transfer flavoprotein beta subunit lysine methyltransferase from Mus musculus (Mouse).